The following is a 774-amino-acid chain: DNA ligase (774 aa).

Residues 36–40 (DAVYD), 85–86 (SL), and Glu-161 each bind NAD(+). Lys-163 functions as the N6-AMP-lysine intermediate in the catalytic mechanism. The NAD(+) site is built by Arg-184, Glu-221, Lys-341, and Lys-365. 4 residues coordinate Zn(2+): Cys-459, Cys-462, Cys-477, and Cys-482. The 82-residue stretch at 693 to 774 (VQSGLLRGKT…LLEALAVTGI (82 aa)) folds into the BRCT domain.

The protein belongs to the NAD-dependent DNA ligase family. LigA subfamily. Requires Mg(2+) as cofactor. It depends on Mn(2+) as a cofactor.

It carries out the reaction NAD(+) + (deoxyribonucleotide)n-3'-hydroxyl + 5'-phospho-(deoxyribonucleotide)m = (deoxyribonucleotide)n+m + AMP + beta-nicotinamide D-nucleotide.. In terms of biological role, DNA ligase that catalyzes the formation of phosphodiester linkages between 5'-phosphoryl and 3'-hydroxyl groups in double-stranded DNA using NAD as a coenzyme and as the energy source for the reaction. It is essential for DNA replication and repair of damaged DNA. The chain is DNA ligase from Trichodesmium erythraeum (strain IMS101).